The sequence spans 212 residues: Stromal cell-derived factor 2-like protein (212 aa).

The signal sequence occupies residues 1–19; that stretch reads MKSLFLILILCITIPLIFA. The N-linked (GlcNAc...) asparagine glycan is linked to Asn20. MIR domains are found at residues 29–86, 94–149, and 151–206; these read ITKV…IKGP, GTVV…VETE, and GKEW…TEEG.

It localises to the secreted. In Dictyostelium discoideum (Social amoeba), this protein is Stromal cell-derived factor 2-like protein.